The following is a 919-amino-acid chain: Isoleucine--tRNA ligase (919 aa).

The short motif at 57–67 (PYANGDIHMGT) is the 'HIGH' region element. L-isoleucyl-5'-AMP is bound at residue Glu-552. Positions 593 to 597 (KMSKS) match the 'KMSKS' region motif. Lys-596 contacts ATP. Cys-886, Cys-889, Cys-906, and Cys-909 together coordinate Zn(2+).

The protein belongs to the class-I aminoacyl-tRNA synthetase family. IleS type 1 subfamily. Monomer. The cofactor is Zn(2+).

It localises to the cytoplasm. The catalysed reaction is tRNA(Ile) + L-isoleucine + ATP = L-isoleucyl-tRNA(Ile) + AMP + diphosphate. Functionally, catalyzes the attachment of isoleucine to tRNA(Ile). As IleRS can inadvertently accommodate and process structurally similar amino acids such as valine, to avoid such errors it has two additional distinct tRNA(Ile)-dependent editing activities. One activity is designated as 'pretransfer' editing and involves the hydrolysis of activated Val-AMP. The other activity is designated 'posttransfer' editing and involves deacylation of mischarged Val-tRNA(Ile). The protein is Isoleucine--tRNA ligase of Petrotoga mobilis (strain DSM 10674 / SJ95).